We begin with the raw amino-acid sequence, 177 residues long: B-phycoerythrin beta chain (177 aa).

Phycourobilin is bound by residues cysteine 50 and cysteine 61. Position 72 is an N4-methylasparagine (asparagine 72). 2 residues coordinate (2R,3E)-phycoerythrobilin: cysteine 82 and cysteine 158.

This sequence belongs to the phycobiliprotein family. Heteromer of 6 alpha, 6 beta and one gamma chain. Contains two covalently linked phycoerythrobilin chromophores and one covalently linked phycourobilin chromophore.

The protein resides in the plastid. It localises to the chloroplast thylakoid membrane. In terms of biological role, light-harvesting photosynthetic bile pigment-protein from the phycobiliprotein complex. This is B-phycoerythrin beta chain (cpeB) from Porphyridium purpureum (Red alga).